Consider the following 500-residue polypeptide: Lysine--tRNA ligase (500 aa).

Glu-410 and Glu-417 together coordinate Mg(2+).

This sequence belongs to the class-II aminoacyl-tRNA synthetase family. As to quaternary structure, homodimer. It depends on Mg(2+) as a cofactor.

It localises to the cytoplasm. It catalyses the reaction tRNA(Lys) + L-lysine + ATP = L-lysyl-tRNA(Lys) + AMP + diphosphate. This Mycoplasma capricolum subsp. capricolum (strain California kid / ATCC 27343 / NCTC 10154) protein is Lysine--tRNA ligase.